We begin with the raw amino-acid sequence, 295 residues long: Undecaprenyl-diphosphatase (295 aa).

A run of 7 helical transmembrane segments spans residues 12 to 34 (IAIAILQGATELFPVSSLGHAVV), 50 to 70 (FLPFLVFLHLGTAAALLLYFW), 95 to 115 (IFMLLVVATLPAIVVGGLLEH), 120 to 140 (LFESAPIAAFFLVVNGGLLLF), 209 to 229 (AHFSFLIALPIILGATVLEVP), 243 to 263 (TAALAAVAAGITAWLSTAFLM), and 272 to 292 (WALKPFAFYCIIAGLGALAWL).

This sequence belongs to the UppP family.

The protein localises to the cell inner membrane. It catalyses the reaction di-trans,octa-cis-undecaprenyl diphosphate + H2O = di-trans,octa-cis-undecaprenyl phosphate + phosphate + H(+). Functionally, catalyzes the dephosphorylation of undecaprenyl diphosphate (UPP). Confers resistance to bacitracin. The chain is Undecaprenyl-diphosphatase from Granulibacter bethesdensis (strain ATCC BAA-1260 / CGDNIH1).